The chain runs to 898 residues: MRTVACAVLLACFMGCLAGAWAQSAGLEILPNSENQTKPIGRSMLLTCKPNVTNKNLISQLRWTDPSGREVPFKNPTLLKPHIFVDWLPPPGEKVLTLMIPELREADTGTYTCSALYSNTKQLSKSVHVRTIMPITWDDAPEEQYPTVNETFKIRCRVSANPPAIVNWMRDGHIVETGDRYVVEQDGLTILNVTEMDDGTYTCRAIVIATGEMALRPIRVEVHTPPQMSGALPPKLEAVEGTDFTAKCAASGKPVPRYTWIRVDTARDLTKDGDRVSADVLLGELRIREVRPEDAANYSCTAKNAAGTATATVEVTVVVRPRIGRFDNISVASGKDSEAVLECHATGSPLPAVTFRKLSNPNRYINGIQPTEDRITVDGVDSPDGRTRIGKLIISNVLRSDDGLYECIATNKGGEVKKNGHLMVEFKPSFADTPQKEVWGWEQHAVNLTCLAHSIPNATISWHFNGADLFRGREGQELQQTGYTLFGSGPRSTLQVIPFNRKMYGNYKCTATNKHGTAVHEIMLREARVPSAVLQVKMDVMTATTVTFKFFGPGNDGGLPTKNYAVQYKQDSQGWEDALNRTWPVDSPYILENLKPQTRYNFRFAAQNEVGFGPWSSQQTHTTPRISAPEEPRLLGLPLSATSGTENEVVVSPYPNRYELRWQVPADNGEPITHYSVKSCPVEKYDTEWRLLPYPCQEHKLEGQATTFQLESLQPDTHYKVEVRATNAIGNSVPGQIIVRTVKDPSQMPGVANVEDGSEGQMSSAAIVVLVVAALLLALLVVDLVCCLVWRGGLIAALCHRCCSAAKTDDSDAKIASLYSWRFPLPYCSNKEDPAMLAPAKMQQATVKIPVIEEKEPLRDGKEPVPIIKERVKRETAVDFDVKKSVSRTSFVGKDSAV.

Positions 1-22 are cleaved as a signal peptide; sequence MRTVACAVLLACFMGCLAGAWA. The Extracellular segment spans residues 23–764; it reads QSAGLEILPN…EDGSEGQMSS (742 aa). Ig-like C2-type domains lie at 31-124, 134-219, 226-316, 321-423, and 428-525; these read PNSE…KQLS, PITW…RPIR, PQMS…VEVT, PRIG…GHLM, and PSFA…IMLR. N-linked (GlcNAc...) asparagine glycosylation is found at N35, N51, N149, N192, N297, and N328. An intrachain disulfide couples C48 to C113. Cystine bridges form between C156-C203 and C248-C300. Residues C343 and C407 are joined by a disulfide bond. 3 N-linked (GlcNAc...) asparagine glycosylation sites follow: N447, N457, and N580. A disulfide bridge links C450 with C509. Fibronectin type-III domains follow at residues 532–626 and 644–745; these read AVLQ…TPRI and GTEN…VKDP. Residues 765 to 782 form a helical membrane-spanning segment; that stretch reads AAIVVLVVAALLLALLVV. At 783-898 the chain is on the cytoplasmic side; sequence DLVCCLVWRG…TSFVGKDSAV (116 aa).

It localises to the membrane. Functionally, neuronal recognition molecule. Involved in a pathway recognition for axons during the development of nerve fascicles. The chain is Fasciclin-2 (FAS2) from Schistocerca americana (American grasshopper).